A 120-amino-acid chain; its full sequence is uncharacterized protein (120 aa).

Residues 80 to 99 are disordered; it reads PTRKLQTPLNEPPRTWRKTA.

This is an uncharacterized protein from Goose circovirus (GoCV).